Consider the following 133-residue polypeptide: Thioredoxin-2, mitochondrial (133 aa).

The N-terminal 29 residues, 1-29, are a transit peptide targeting the mitochondrion; it reads MRGFIANSLKPHMRSFALRRSFTSSRILR. One can recognise a Thioredoxin domain in the interval 30 to 133; the sequence is KVNAVESFGD…LSSLLAKYQE (104 aa). Catalysis depends on nucleophile residues Cys59 and Cys62. Residues Cys59 and Cys62 are joined by a disulfide bond.

Belongs to the thioredoxin family. As to quaternary structure, interacts with arg3.

The protein localises to the mitochondrion. In terms of biological role, disulfide reductase which serves multiple functions in mitochondria, protecting mitochondrial components against thiol-oxidative damage as a thiol-disulfide oxidoreductase, and supporting urea cycle and respiration in mitochondria in a manner independent of active site thiols. This chain is Thioredoxin-2, mitochondrial (trx2), found in Schizosaccharomyces pombe (strain 972 / ATCC 24843) (Fission yeast).